Reading from the N-terminus, the 210-residue chain is Thiamine-phosphate synthase (210 aa).

4-amino-2-methyl-5-(diphosphooxymethyl)pyrimidine is bound by residues 39-43 (QLREK) and N71. Positions 72 and 91 each coordinate Mg(2+). S110 serves as a coordination point for 4-amino-2-methyl-5-(diphosphooxymethyl)pyrimidine. Position 134-136 (134-136 (TPT)) interacts with 2-[(2R,5Z)-2-carboxy-4-methylthiazol-5(2H)-ylidene]ethyl phosphate. 4-amino-2-methyl-5-(diphosphooxymethyl)pyrimidine is bound at residue K137. A 2-[(2R,5Z)-2-carboxy-4-methylthiazol-5(2H)-ylidene]ethyl phosphate-binding site is contributed by G163.

Belongs to the thiamine-phosphate synthase family. The cofactor is Mg(2+).

It carries out the reaction 2-[(2R,5Z)-2-carboxy-4-methylthiazol-5(2H)-ylidene]ethyl phosphate + 4-amino-2-methyl-5-(diphosphooxymethyl)pyrimidine + 2 H(+) = thiamine phosphate + CO2 + diphosphate. It catalyses the reaction 2-(2-carboxy-4-methylthiazol-5-yl)ethyl phosphate + 4-amino-2-methyl-5-(diphosphooxymethyl)pyrimidine + 2 H(+) = thiamine phosphate + CO2 + diphosphate. The catalysed reaction is 4-methyl-5-(2-phosphooxyethyl)-thiazole + 4-amino-2-methyl-5-(diphosphooxymethyl)pyrimidine + H(+) = thiamine phosphate + diphosphate. It participates in cofactor biosynthesis; thiamine diphosphate biosynthesis; thiamine phosphate from 4-amino-2-methyl-5-diphosphomethylpyrimidine and 4-methyl-5-(2-phosphoethyl)-thiazole: step 1/1. Condenses 4-methyl-5-(beta-hydroxyethyl)thiazole monophosphate (THZ-P) and 2-methyl-4-amino-5-hydroxymethyl pyrimidine pyrophosphate (HMP-PP) to form thiamine monophosphate (TMP). This chain is Thiamine-phosphate synthase, found in Campylobacter jejuni subsp. jejuni serotype O:2 (strain ATCC 700819 / NCTC 11168).